A 67-amino-acid chain; its full sequence is Histone H2A (67 aa).

N5-methylglutamine is present on Gln60.

This sequence belongs to the histone H2A family. As to quaternary structure, the nucleosome is a histone octamer containing two molecules each of H2A, H2B, H3 and H4 assembled in one H3-H4 heterotetramer and two H2A-H2B heterodimers. The octamer wraps approximately 147 bp of DNA.

The protein resides in the nucleus. The protein localises to the chromosome. Core component of nucleosome. Nucleosomes wrap and compact DNA into chromatin, limiting DNA accessibility to the cellular machineries which require DNA as a template. Histones thereby play a central role in transcription regulation, DNA repair, DNA replication and chromosomal stability. DNA accessibility is regulated via a complex set of post-translational modifications of histones, also called histone code, and nucleosome remodeling. This Olisthodiscus luteus (Marine phytoflagellate) protein is Histone H2A.